Reading from the N-terminus, the 443-residue chain is Glutamate--tRNA ligase 2 (443 aa).

Positions 7–17 (PSPTGYLHVGN) match the 'HIGH' region motif. The 'KMSKS' region signature appears at 236 to 240 (KISKR). Position 239 (Lys-239) interacts with ATP.

The protein belongs to the class-I aminoacyl-tRNA synthetase family. Glutamate--tRNA ligase type 1 subfamily. Monomer.

The protein resides in the cytoplasm. The catalysed reaction is tRNA(Glu) + L-glutamate + ATP = L-glutamyl-tRNA(Glu) + AMP + diphosphate. In terms of biological role, catalyzes the attachment of glutamate to tRNA(Glu) in a two-step reaction: glutamate is first activated by ATP to form Glu-AMP and then transferred to the acceptor end of tRNA(Glu). The chain is Glutamate--tRNA ligase 2 from Ehrlichia canis (strain Jake).